A 356-amino-acid polypeptide reads, in one-letter code: Methylthioribose-1-phosphate isomerase (356 aa).

Asp-234 functions as the Proton donor in the catalytic mechanism.

This sequence belongs to the eIF-2B alpha/beta/delta subunits family. MtnA subfamily.

The protein localises to the cytoplasm. Its subcellular location is the nucleus. The catalysed reaction is 5-(methylsulfanyl)-alpha-D-ribose 1-phosphate = 5-(methylsulfanyl)-D-ribulose 1-phosphate. The protein operates within amino-acid biosynthesis; L-methionine biosynthesis via salvage pathway; L-methionine from S-methyl-5-thio-alpha-D-ribose 1-phosphate: step 1/6. Its function is as follows. Catalyzes the interconversion of methylthioribose-1-phosphate (MTR-1-P) into methylthioribulose-1-phosphate (MTRu-1-P). The sequence is that of Methylthioribose-1-phosphate isomerase (mri1) from Schizosaccharomyces japonicus (strain yFS275 / FY16936) (Fission yeast).